The chain runs to 617 residues: MALLQIAEPGQSAAPHQHRLAVGIDLGTTNSLVAAVRSGVPETLKDDKGRSILPSIVHYGEESLLVGHEARELAQQDPSNTIFSVKRMMGRSLADIQQRYPHLPYQFEASDNGLPQLMTPTGKVNPVQVSAEILKTLNARAVATLGGDLEGVVITVPAYFDDAQRAGTKDAAKLANLNVLRLLNEPTAAAIAYGLDSGQEGVIAVYDLGGGTFDISVLRLSKGVFEVLATGGDSALGGDDFDHLLADWIKEQAGYIGDLTAQQMRMVQDAATDAKIALTDADTAQIDVLNWQGIVTREQFNALIQPLVKKTLMSCRRAIKDSGIEISDTIETVMVGGSTRVPLVREMVGNYFGKEPLTSIDPDKVVAIGASIQADILVGNKPDSDMLLLDVIPLSLGIETMGGMIEKIIPRNTTIPVARAQEFTTFKDGQTAMSVHVVQGEREMVSDCRSLARFTLRGIPAMTAGAAHIRVTYQVDADGLLSVTAMEKSSNVQSSIQVKPSYGLSDNEVATMIRESMTHAQDDKDARTLAEQYVEADRVLEGLITALAIDGDTLLSKEERETLEGVMMELVQLRKGTDYRSIEQGIKKTDKASQEFASRRMDKSIRQALAGQSIDEV.

Belongs to the heat shock protein 70 family.

In terms of biological role, chaperone involved in the maturation of iron-sulfur cluster-containing proteins. Has a low intrinsic ATPase activity which is markedly stimulated by HscB. In Photobacterium profundum (strain SS9), this protein is Chaperone protein HscA homolog.